The chain runs to 345 residues: MLTSRAEIILRSIVRQYITKAVPVSSSSILEDCGLDICSATIRNEVVRLEIEGYILRPHHSAGSIPADKGYRYYVESLKDVELPTNDKFLIRHLFHQVEKEMEEWLNLTVAVLSQRVQSMAVVTMPRQTQGKVHHIELVSLQDNLVLVVLILRGAKVKQQLVNFENVVSQPELTLISNRLNDAYDGLTRFQIEQKPLGLNHDELKVKDSLVKMMRGEDEQESREPFFDGLHYMLEQPEFHQNQRAQEIMQLLEQKKLSKMIVPPMPFNRGVQVYIGQENASAEIRDYSLIVSQYGIPDEAVGTIGVIGPTRMAYERALSAVSYLSLVMSTLVAELYGKAPVDKDE.

It belongs to the HrcA family.

In terms of biological role, negative regulator of class I heat shock genes (grpE-dnaK-dnaJ and groELS operons). Prevents heat-shock induction of these operons. The protein is Heat-inducible transcription repressor HrcA of Dehalococcoides mccartyi (strain ATCC BAA-2100 / JCM 16839 / KCTC 5957 / BAV1).